Reading from the N-terminus, the 1233-residue chain is DNA-directed RNA polymerase subunit beta' (1233 aa).

Residues Cys61, Cys63, Cys76, and Cys79 each coordinate Zn(2+). Asp455, Asp457, and Asp459 together coordinate Mg(2+). Zn(2+) is bound by residues Cys824, Cys898, Cys905, and Cys908. Residues Glu1211 to Pro1220 are compositionally biased toward basic and acidic residues. The interval Glu1211 to Lys1233 is disordered. Residues Ala1221 to Lys1233 show a composition bias toward polar residues.

This sequence belongs to the RNA polymerase beta' chain family. As to quaternary structure, the RNAP catalytic core consists of 2 alpha, 1 beta, 1 beta' and 1 omega subunit. When a sigma factor is associated with the core the holoenzyme is formed, which can initiate transcription. The cofactor is Mg(2+). It depends on Zn(2+) as a cofactor.

It carries out the reaction RNA(n) + a ribonucleoside 5'-triphosphate = RNA(n+1) + diphosphate. Functionally, DNA-dependent RNA polymerase catalyzes the transcription of DNA into RNA using the four ribonucleoside triphosphates as substrates. In Oenococcus oeni (strain ATCC BAA-331 / PSU-1), this protein is DNA-directed RNA polymerase subunit beta'.